The sequence spans 819 residues: MAPLNTYTSTEVLLLDNACNDVHELGRALWSITVDRYHHRDEWTLTCLAEAHGRWDMTYRLVSIQNATTIGQLLAAERLVESPKDASDEDNIFAFATTGSRLPVRTLLGRSSFILQLSEFDGRPTAQVLFSGANNKGQARILLNVFHSLWETHGSSPLNAERPVCEVGGLSYEDVRILELVNSGRLAQQQECIHDVVLQHALQAPTQHAVRAWDGNLTYHQLNDHADRIATMLVSAGIGPGDFIPSIMEKSYWTIVVILATLKAGAVFVPIDPKCPASRINGIFLQVWPKVYFTNLGPQMRRKLNPSVACVDNFAEIVQQVQPGPLPPSRPDAIATCFFTSGSTGKPKGAIHDHSAIATGIVDLLGPFHMDSRTSSMHFVSPSFDVSVTEIAATLYAGGCICVPSEQGKLNDLNGQMRALGVTHAFLTPSVACQVKPSEVPTLQYIMLGGEPLGRATLEALCEDVHLINVYGSTESGLWDTASERLTLQSKPSNIGRSTGPRMWIVHPGNPGNLLPFGTVGEVMVESHCLARGYIGNQPAKTGFVPAPEWRHQLFPGMEQGRFYLTGDLGSYNPDGSIMLHGRKDTQAKIRGQRIELGEIEHQFKAALPTSRVVAEVVTIGSRTMLAAFVELSTAEDKTDIEPSVCVDSLSIRTAQAARLGATPALSAALPVYMVPEMYIPVNSIPLTMSGKTDRRRLRELASTITTVQLEMINGVDDEKEQPRNERERLIQATWAAVLQRKASTIGIHDHFFKIGGDSLSAMKVVAAARSRQLVINVGDILGHPTIASLAEFLSSSSTISYATKGMANRDIQVTVTVL.

The adenylation (A) domain stretch occupies residues Leu-202–Arg-591. The Carrier domain occupies Gln-722–Ser-798. O-(pantetheine 4'-phosphoryl)serine is present on Ser-759.

It belongs to the NRP synthetase family.

Its pathway is secondary metabolite biosynthesis. Functionally, nonribosomal peptide synthetase; part of the Fg3_54/C64 gene cluster that mediates the biosynthesis of the octapeptide fusaoctaxin A, a virulence factor that is required for cell-to-cell invasiveness of plant host. The 2 nonribosomal peptide synthetases NRPS9 and NRPS5 form an assembly line which likely utilizes GABA as a starter unit (loaded on the unique module M1 of NRPS9) and sequentially incorporates seven extender units composed of the residues L-Ala, L-allo-Ile, L-Ser, L-Val, L-Ser, L-Leu and L-Leu, respectively. During the process, each of the residues that are tethered on modules M3-M7 of NRPS5 containing an E domain can undergo an epimerization reaction to produce a D-configuration before the transpeptidation reaction occurs. The elongation of the peptidyl chain might be terminated by module M8-mediated L-Leu incorporation, followed by R domain-catalyzed 4 electron reduction to release the resulting octapeptide from the assembly line as an alcohol. Fusaoctaxin A is cleaved by the cluster specific ABC transporter FGM5 to the pentapeptide fusapentaxin A and the tripeptide fusatrixin A. The other enzymes from the cluster, FGM1, FGM2, FGM3 and FGM9 seem not to be involved in the biosynthesis of fusaoctaxin A and their functions have still to be determined. The chain is Nonribosomal peptide synthetase 9 from Gibberella zeae (strain ATCC MYA-4620 / CBS 123657 / FGSC 9075 / NRRL 31084 / PH-1) (Wheat head blight fungus).